A 164-amino-acid polypeptide reads, in one-letter code: Cyclic pyranopterin monophosphate synthase (164 aa).

Substrate contacts are provided by residues 75-77 and 116-117; these read MCH and ME. D131 is a catalytic residue.

The protein belongs to the MoaC family. As to quaternary structure, homohexamer; trimer of dimers.

It carries out the reaction (8S)-3',8-cyclo-7,8-dihydroguanosine 5'-triphosphate = cyclic pyranopterin phosphate + diphosphate. It functions in the pathway cofactor biosynthesis; molybdopterin biosynthesis. Catalyzes the conversion of (8S)-3',8-cyclo-7,8-dihydroguanosine 5'-triphosphate to cyclic pyranopterin monophosphate (cPMP). The polypeptide is Cyclic pyranopterin monophosphate synthase (Staphylococcus aureus (strain USA300)).